Reading from the N-terminus, the 801-residue chain is Probable phosphoketolase (801 aa).

It belongs to the XFP family. Thiamine diphosphate serves as cofactor.

This is Probable phosphoketolase from Bradyrhizobium diazoefficiens (strain JCM 10833 / BCRC 13528 / IAM 13628 / NBRC 14792 / USDA 110).